The primary structure comprises 127 residues: uncharacterized protein (127 aa).

This is an uncharacterized protein from Pasteurella multocida (strain Pm70).